A 32-amino-acid chain; its full sequence is Snaclec (32 aa).

Dimer; disulfide-linked. Expressed by the venom gland.

The protein resides in the secreted. In terms of biological role, interferes with one step of hemostasis (modulation of platelet aggregation, or coagulation cascade, for example). The sequence is that of Snaclec from Bothrops diporus (Chaco lancehead).